The chain runs to 303 residues: MKQYGKVAVLMGGSSSEREVSLMSGAGVLSALRSKGVDAHGFDPSEKPLSALKEEGFDCVFNILHGPFGEDGTLQGALEALGMPYTGCGVMASAIAMDKWRTKLLWKGAGLPIPAFELLDENSDFDAIERQLGLPIFVKPSTEGSSIGVTKVKQPGELRAAFEEARKYDKVVIAEQFIGGGEYTCAVIGETAYPTIKIEPATEYYDYQAKYFRDDTVYRCPSGLAPEVEARARELALKAFKVLGCRGWSRVDFLMDEAGEIYLLEANTSPGMTSHSLVPMAARAEGIAYEDLCLKVLDTVHVG.

The 196-residue stretch at 103-298 folds into the ATP-grasp domain; sequence KLLWKGAGLP…YEDLCLKVLD (196 aa). ATP is bound at residue 129–184; the sequence is ERQLGLPIFVKPSTEGSSIGVTKVKQPGELRAAFEEARKYDKVVIAEQFIGGGEYT. The Mg(2+) site is built by D252, E265, and N267.

It belongs to the D-alanine--D-alanine ligase family. Requires Mg(2+) as cofactor. Mn(2+) serves as cofactor.

It is found in the cytoplasm. It catalyses the reaction 2 D-alanine + ATP = D-alanyl-D-alanine + ADP + phosphate + H(+). Its pathway is cell wall biogenesis; peptidoglycan biosynthesis. Cell wall formation. This is D-alanine--D-alanine ligase B from Chromobacterium violaceum (strain ATCC 12472 / DSM 30191 / JCM 1249 / CCUG 213 / NBRC 12614 / NCIMB 9131 / NCTC 9757 / MK).